Reading from the N-terminus, the 130-residue chain is Hypocretin neuropeptide precursor (130 aa).

The N-terminal stretch at 1 to 32 is a signal peptide; the sequence is MNFPSTKVPWAAVTLLLLLLLPPALLSLGVDA. Glutamine 33 carries the pyrrolidone carboxylic acid modification. 2 cysteine pairs are disulfide-bonded: cysteine 38/cysteine 44 and cysteine 39/cysteine 46. Leucine amide is present on leucine 65. Residue methionine 96 is modified to Methionine amide. Residues 97–130 constitute a propeptide that is removed on maturation; that stretch reads GRRAGAELEPHPCSGRGCPTVTTTALAPRGGSGV.

It belongs to the orexin family. In terms of processing, specific enzymatic cleavages at paired basic residues yield the different active peptides. In terms of tissue distribution, restricted to neuronal cell bodies of the dorsal and lateral hypothalamus.

The protein resides in the rough endoplasmic reticulum. Its subcellular location is the cytoplasmic vesicle. The protein localises to the synapse. Its function is as follows. Neuropeptides that play a significant role in the regulation of food intake and sleep-wakefulness, possibly by coordinating the complex behavioral and physiologic responses of these complementary homeostatic functions. A broader role in the homeostatic regulation of energy metabolism, autonomic function, hormonal balance and the regulation of body fluids, is also suggested. Binds to orexin receptors HCRTR1/OX1R and HCRTR2/OX2R with a high affinity. Stimulates food intake. Modulates pituitary luteinizing hormone secretion in an ovarian steroid-dependent manner. Functionally, binds to orexin receptor HCRTR2/OX2R only. Stimulates food intake. Modulates pituitary luteinizing hormone secretion in an ovarian steroid-dependent manner. This chain is Hypocretin neuropeptide precursor (Hcrt), found in Mus musculus (Mouse).